Reading from the N-terminus, the 250-residue chain is Accessory gland-specific peptide 26Aa (250 aa).

Residues 1-18 (MNQILLCSQILLLFFTVA) form the signal peptide. Residues 79 to 100 (DYPINNSKSRKNSSTLPSPILT) form a disordered region. Polar residues predominate over residues 82-95 (INNSKSRKNSSTLP). N-linked (GlcNAc...) asparagine glycans are attached at residues asparagine 83, asparagine 90, and asparagine 131. Disordered regions lie at residues 172-191 (NVQN…SKDI) and 230-250 (NNPA…PSTT). Over residues 178–187 (KSTKSCKKRP) the composition is skewed to basic residues. Positions 240–250 (KSPSEGNPSTT) are enriched in polar residues.

In terms of processing, proteolytically cleaved as it is secreted and in the recipient female. As to expression, main cells of the accessory glands of males.

The protein localises to the secreted. It localises to the extracellular space. Functionally, this protein is transferred from male to female's hemolymph during mating, affecting egglaying and behavior after mating. In Drosophila mauritiana (Fruit fly), this protein is Accessory gland-specific peptide 26Aa (Acp26Aa).